The chain runs to 208 residues: ATP-dependent Clp protease proteolytic subunit (208 aa).

Serine 98 functions as the Nucleophile in the catalytic mechanism. The active site involves histidine 123.

Belongs to the peptidase S14 family. In terms of assembly, fourteen ClpP subunits assemble into 2 heptameric rings which stack back to back to give a disk-like structure with a central cavity, resembling the structure of eukaryotic proteasomes.

It is found in the cytoplasm. The enzyme catalyses Hydrolysis of proteins to small peptides in the presence of ATP and magnesium. alpha-casein is the usual test substrate. In the absence of ATP, only oligopeptides shorter than five residues are hydrolyzed (such as succinyl-Leu-Tyr-|-NHMec, and Leu-Tyr-Leu-|-Tyr-Trp, in which cleavage of the -Tyr-|-Leu- and -Tyr-|-Trp bonds also occurs).. Functionally, cleaves peptides in various proteins in a process that requires ATP hydrolysis. Has a chymotrypsin-like activity. Plays a major role in the degradation of misfolded proteins. In Wolbachia pipientis subsp. Culex pipiens (strain wPip), this protein is ATP-dependent Clp protease proteolytic subunit.